A 501-amino-acid chain; its full sequence is ATP synthase subunit alpha (501 aa).

169–176 (GDRQTGKT) provides a ligand contact to ATP.

This sequence belongs to the ATPase alpha/beta chains family. As to quaternary structure, F-type ATPases have 2 components, CF(1) - the catalytic core - and CF(0) - the membrane proton channel. CF(1) has five subunits: alpha(3), beta(3), gamma(1), delta(1), epsilon(1). CF(0) has three main subunits: a(1), b(2) and c(9-12). The alpha and beta chains form an alternating ring which encloses part of the gamma chain. CF(1) is attached to CF(0) by a central stalk formed by the gamma and epsilon chains, while a peripheral stalk is formed by the delta and b chains.

Its subcellular location is the cell membrane. It carries out the reaction ATP + H2O + 4 H(+)(in) = ADP + phosphate + 5 H(+)(out). In terms of biological role, produces ATP from ADP in the presence of a proton gradient across the membrane. The alpha chain is a regulatory subunit. The protein is ATP synthase subunit alpha of Streptococcus equi subsp. zooepidemicus (strain H70).